The primary structure comprises 307 residues: Ornithine carbamoyltransferase (307 aa).

Carbamoyl phosphate-binding positions include S53–T56, Q80, R104, and H131–Q134. L-ornithine contacts are provided by residues N162, D220, and S224–M225. Carbamoyl phosphate contacts are provided by residues C260–L261 and R288.

It belongs to the aspartate/ornithine carbamoyltransferase superfamily. OTCase family.

The protein resides in the cytoplasm. It catalyses the reaction carbamoyl phosphate + L-ornithine = L-citrulline + phosphate + H(+). Its pathway is amino-acid biosynthesis; L-arginine biosynthesis; L-arginine from L-ornithine and carbamoyl phosphate: step 1/3. Its function is as follows. Reversibly catalyzes the transfer of the carbamoyl group from carbamoyl phosphate (CP) to the N(epsilon) atom of ornithine (ORN) to produce L-citrulline. In Nitrosomonas europaea (strain ATCC 19718 / CIP 103999 / KCTC 2705 / NBRC 14298), this protein is Ornithine carbamoyltransferase.